Consider the following 924-residue polypeptide: Probable dipeptidyl-aminopeptidase B (924 aa).

Residues 1-104 (MPPFTYSDDT…DQRSPGDGQR (104 aa)) form a disordered region. Topologically, residues 1–111 (MPPFTYSDDT…GQRMDRSLRR (111 aa)) are cytoplasmic. A compositionally biased stretch (basic and acidic residues) spans 9–23 (DTLRSGRDRFRDHSP). Residues 31–43 (SQETDSSASTTSI) show a composition bias toward polar residues. Composition is skewed to basic and acidic residues over residues 47–58 (RIQERLDTKEFT) and 92–104 (SRSD…DGQR). Residues 112-132 (WLFIVSGVLVATWVIGLFVFV) traverse the membrane as a helical; Signal-anchor for type II membrane protein segment. Residues 133-924 (SSKAYKPSSS…GMKKRAAPTA (792 aa)) lie on the Vacuolar side of the membrane. Asn231 and Asn364 each carry an N-linked (GlcNAc...) asparagine glycan. Ser768 functions as the Charge relay system in the catalytic mechanism. N-linked (GlcNAc...) asparagine glycosylation occurs at Asn827. Active-site charge relay system residues include Asp845 and His878.

Belongs to the peptidase S9B family.

Its subcellular location is the vacuole membrane. The catalysed reaction is Release of an N-terminal dipeptide, Xaa-Yaa-|-Zaa-, from a polypeptide, preferentially when Yaa is Pro, provided Zaa is neither Pro nor hydroxyproline.. Type IV dipeptidyl-peptidase which removes N-terminal dipeptides sequentially from polypeptides having unsubstituted N-termini provided that the penultimate residue is proline. In Sordaria macrospora (strain ATCC MYA-333 / DSM 997 / K(L3346) / K-hell), this protein is Probable dipeptidyl-aminopeptidase B (DAPB).